The chain runs to 297 residues: Vacuolar protein sorting-associated protein 26C (297 aa).

It belongs to the VPS26 family. In terms of assembly, component of the commander complex that is essential for endosomal recycling of transmembrane cargos; the commander complex is composed of the CCC subcomplex and the retriever subcomplex. Component of the heterotrimeric retriever complex consisting of VPS26C, VPS29 and VPS35L; within the complex interacts with VPS35L. Interacts with SNX17 (via C-terminus); the interaction is direct and associates SNX17 with the retriever complex. Interacts with SNX31; the interaction is direct. As to expression, ubiquitously expressed.

The protein resides in the endosome. In terms of biological role, component of the commander complex that is essential for endosomal recycling of transmembrane cargos; the commander complex is composed of the CCC subcomplex and the retriever subcomplex. Component of the retriever complex, which is a heterotrimeric complex related to retromer cargo-selective complex (CSC) and essential for retromer-independent retrieval and recycling of numerous cargos such as integrin alpha-5/beta-1 (ITGA5:ITGB1). The recruitment of the retriever complex to the endosomal membrane involves CCC and WASH complexes. In the endosomes, drives the retriever and recycling of NxxY-motif-containing cargo proteins by coupling to SNX17, a cargo essential for the homeostatic maintenance of numerous cell surface proteins associated with processes that include cell migration, cell adhesion, nutrient supply and cell signaling. (Microbial infection) The heterotrimeric retriever complex, in collaboration with the CCC complex, mediates the exit of human papillomavirus to the cell surface. This is Vacuolar protein sorting-associated protein 26C from Homo sapiens (Human).